Here is a 168-residue protein sequence, read N- to C-terminus: Disulfide bond formation protein B (168 aa).

Residues 1-6 (MTSRWI) lie on the Cytoplasmic side of the membrane. A helical transmembrane segment spans residues 7–23 (FGLVFLVCAGLLAVAFY). Residues 24-41 (MEHVMGLEPCPLCWLQRF) are Periplasmic-facing. A disulfide bond links Cys33 and Cys36. A helical transmembrane segment spans residues 42–58 (GFMGAGLVSLLAFLHGP). Topologically, residues 59-65 (RGFGNRV) are cytoplasmic. Residues 66–82 (YGLLLIVAAGAGLAVAG) form a helical membrane-spanning segment. Residues 83 to 139 (RQLWLQSLPADQVPACGPSVDYMLEVLPWFEVLQTALKGTGDCAEVVWRFLGLSIPG) are Periplasmic-facing. A disulfide bond links Cys98 and Cys125. The helical transmembrane segment at 140–158 (WTAVFFSLLIVLGLFVMLR) threads the bilayer. Residues 159–168 (RYSPRDWLQS) lie on the Cytoplasmic side of the membrane.

It belongs to the DsbB family.

Its subcellular location is the cell inner membrane. Required for disulfide bond formation in some periplasmic proteins. Acts by oxidizing the DsbA protein. This chain is Disulfide bond formation protein B, found in Marinobacter nauticus (strain ATCC 700491 / DSM 11845 / VT8) (Marinobacter aquaeolei).